Consider the following 268-residue polypeptide: Putative sgc region protein SgcQ (268 aa).

It belongs to the BtpA family.

In Escherichia coli (strain K12), this protein is Putative sgc region protein SgcQ (sgcQ).